A 445-amino-acid chain; its full sequence is Putative transcription factor bHLH056 (445 aa).

3 disordered regions span residues 36 to 70, 224 to 260, and 365 to 445; these read NQTH…PPHL, QIQP…AEMH, and PFPN…QPTA. Basic and acidic residues predominate over residues 231–246; it reads SKLKAREETHGTEEAR. A bHLH domain is found at 255 to 304; that stretch reads RTAEMHNLAERRRREKINEKMKTLQQLIPRCNKSTKVSTLDDAIEYVKSL. The span at 418 to 433 shows a compositional bias: low complexity; the sequence is QGQTTSQLSSGQASSS.

Homodimer.

The protein resides in the nucleus. The polypeptide is Putative transcription factor bHLH056 (BHLH56) (Arabidopsis thaliana (Mouse-ear cress)).